Here is a 212-residue protein sequence, read N- to C-terminus: Response regulator SsrB (212 aa).

A required for prevention of DNA binding in absence of phosphorylation and for full stimulation of activity by acidic pH region spans residues 1–138; that stretch reads MKEYKILLVD…PTLNREAILA (138 aa). A Response regulatory domain is found at 5–121; that stretch reads KILLVDDHEI…VLLAALQTVA (117 aa). Asp-56 is modified (4-aspartylphosphate). In terms of domain architecture, HTH luxR-type spans 143–208; the sequence is DTTNHQLLTL…ELLNCARRMR (66 aa). A DNA-binding region (H-T-H motif) is located at residues 167 to 186; sequence NHGISEKLHISIKTVETHRM. An S-nitrosocysteine modification is found at Cys-203.

Homodimer; disulfide-linked; dimerizes upon DNA-binding. Post-translationally, ssrB phosphorylated on Asp-56 activates the expression of virulence genes whereas the unphosphorylated form controls biofilm formation. Independently of SsrA, can be phosphorylated by small inorganic phosphate donors (such as acetyl phosphate or phosphoramidate). In terms of processing, disulfide bond formation at Cys-203 is not required for dimerization. Cys-203 may serve as a redox sensor that is nitrosylated in presence of reactive nitrogen species (RNS) generated by the host, the modification modulates its DNA-binding activity. Cys-203 is relatively resistant to oxidation by hydrogen peroxide.

The protein localises to the cytoplasm. In terms of biological role, member of the two-component regulatory system SsrA/SsrB (SpiR/SsrB) that is required for intracellular proliferation and systemic dissemination within the host. When inside acidic Salmonella-containing vesicles (SCV) within host cells the SsrA sensor kinase autophosphorylates and the phosphoryl group is transferred to the response regulator SsrB; phosphorylated SsrB activates the expression of genes encoding virulence proteins, including pathogenicity island 2 (SPI2) and other horizontally acquired genes, but also ancestral genes; it can stimulate gene expression both by recruiting RNA polymerase and by antagonizing the action of the transcriptional repressor hns (H-NS). Can also act independently of sensor kinase ssrA to support the dormant carrier state by directing the transcription of factors required for biofilm formation. DNA-binding is stimulated by acidic pH conditions, and binding promotes bending of DNA both upstream and downstream of binding sites. Binds a degenerate 18-basepair palindromic sequence with a 7-4-7 internal organization, and regulates gene expression from 86 operons. When phosphorylated, activates the transcription of the ABC transporter complex dalSTUV, which helps protect the organism from oxidative killing by host neutrophils. Binds the phoP promoter to stimulate expression in acidic pH conditions. Antagonizes hns to activate the transcription of ugtL. Following invasion of host cells, binds the hilD and hilA regulatory regions to repress their transcription and consequently to repress transcription of pathogenicity island 1 (SPI1) encoding genes involved in host cell invasion. Binds the promoters of the flagellar master regulators flhD and flhC to repress their expression and consequently to suppress flagellar motility and promote evasion of the host inflammasome during infection of host cells. Activates expression of sseI/srfH, sifA, sifB, sseJ and regulates its own expression. When unphosphorylated, relieves the hns-mediated repression of master biofilm regulator csgD by binding and bending the csgD regulatory region. May act as early as in the lumen of the host small intestine, to activate the expression of virulence proteins prior to invasion of host cells. This chain is Response regulator SsrB, found in Salmonella typhimurium (strain LT2 / SGSC1412 / ATCC 700720).